Here is a 793-residue protein sequence, read N- to C-terminus: Flavin carrier protein 1 (793 aa).

Positions 1–21 (MQVLVTLWCLICTCLVLPVAA) are cleaved as a signal peptide. Residues 22–163 (KKRTLTASSL…FFSNGKTVSQ (142 aa)) lie on the Lumenal side of the membrane. The N-linked (GlcNAc...) asparagine glycan is linked to Asn143. Residues 164 to 184 (IGVKWVTAVIAGIGLLTSAVL) traverse the membrane as a helical segment. The Cytoplasmic portion of the chain corresponds to 185-194 (STFGNSTAAS). A helical membrane pass occupies residues 195-215 (HISANTMSLFLYFQSVAVVAM). The Lumenal portion of the chain corresponds to 216–223 (QHVDSVPP). The chain crosses the membrane as a helical span at residues 224–244 (IAAAWSENLAWSMGLIRITFM). Over 245 to 249 (QKIFR) the chain is Cytoplasmic. A helical membrane pass occupies residues 250–272 (WYVEATGGSASLYLTATTMSVLT). The Lumenal segment spans residues 273–317 (QRGLDYLKNTSVYKRAENVLYGNSNTLIFRGIKRMGYRMKIENTA). N-linked (GlcNAc...) asparagine glycosylation is present at Asn281. The chain crosses the membrane as a helical span at residues 318-338 (IVCTGFTFFVLCGYFLAGFIM). Topologically, residues 339–372 (ACKYSIELCIRCGWMRSDRFYQFRKNWRSVLKGS) are cytoplasmic. A helical membrane pass occupies residues 373–393 (LLRYIYIGFTQLTILSFWEFT). The Lumenal segment spans residues 394–397 (ERDS). A helical membrane pass occupies residues 398-418 (AGVIVIACLFIVLSCGLMAWA). Topologically, residues 419–461 (AYRTIFFASKSVEMYNNPAALLYGDEYVLNKYGFFYTMFNAKH) are cytoplasmic. Residues 462–482 (YWWNALLTTYILVKALFVGFA) form a helical membrane-spanning segment. The Lumenal segment spans residues 483-484 (QA). The chain crosses the membrane as a helical span at residues 485-505 (SGKTQALAIFIIDLAYFVAII). At 506–516 (RYKPYLDRPTN) the chain is on the cytoplasmic side. A helical membrane pass occupies residues 517–537 (IVNIFICTVTLVNSFLFMFFS). The Lumenal segment spans residues 538-551 (NLFNQKYAVSAIMG). A helical membrane pass occupies residues 552–572 (WVFFIMNAAFSLLLLLMILAF). Residues 573 to 793 (TTIILFSKNP…KANILDPDYL (221 aa)) lie on the Cytoplasmic side of the membrane. At Ser610 the chain carries Phosphoserine. A Phosphothreonine modification is found at Thr626. Disordered stretches follow at residues 649–674 (YDDE…PTFS) and 689–731 (KLGS…QESE). A compositionally biased stretch (polar residues) spans 701-719 (ITQQEVSPDRASSSPNSKS). Phosphoserine is present on residues Ser771 and Ser774.

This sequence belongs to the transient receptor potential (TRP) ion channel family.

The protein localises to the endoplasmic reticulum membrane. Its function is as follows. May be responsible for the transport of FAD into the endoplasmic reticulum lumen, where it is required for oxidative protein folding. This is Flavin carrier protein 1 (FLC1) from Saccharomyces cerevisiae (strain ATCC 204508 / S288c) (Baker's yeast).